An 877-amino-acid chain; its full sequence is Dynamin (877 aa).

One can recognise a Dynamin-type G domain in the interval 23–289 (QLDLPQIAVV…LTNHIRDTLP (267 aa)). The interval 33–40 (GGQSAGKS) is G1 motif. 33–41 (GGQSAGKSS) is a binding site for GTP. The tract at residues 59 to 61 (VTR) is G2 motif. Positions 131-134 (DLPG) are G3 motif. Positions 200–203 (TKLD) are G4 motif. GTP-binding positions include 200-206 (TKLDLMD) and 231-234 (NRSQ). The G5 motif stretch occupies residues 230–233 (VNRS). The 109-residue stretch at 513–621 (QVIRKGHMVI…WKASFLRAGV (109 aa)) folds into the PH domain. Disordered stretches follow at residues 623-648 (PEKQ…QLER) and 740-834 (TVSS…SGAV). Positions 630 to 641 (ENGDESASEESS) are enriched in acidic residues. Positions 650 to 741 (VETIRNLVDS…IIGDVSMATV (92 aa)) constitute a GED domain. Residues Ser-756, Ser-764, and Ser-767 each carry the phosphoserine modification. The span at 788–826 (PPLPPSTGRPAPAIPNRPGGGAPPLPGGRPGGSLPPPML) shows a compositional bias: pro residues.

This sequence belongs to the TRAFAC class dynamin-like GTPase superfamily. Dynamin/Fzo/YdjA family.

It localises to the cytoplasm. The protein localises to the cytoskeleton. The catalysed reaction is GTP + H2O = GDP + phosphate + H(+). Its function is as follows. Microtubule-associated force-producing protein which is involved in the production of microtubule bundles and which is able to bind and hydrolyze GTP. Implicated in endocytic protein sorting. This is Dynamin (shi) from Drosophila melanogaster (Fruit fly).